An 83-amino-acid polypeptide reads, in one-letter code: Small ribosomal subunit protein bS16 (83 aa).

Belongs to the bacterial ribosomal protein bS16 family.

This chain is Small ribosomal subunit protein bS16, found in Albidiferax ferrireducens (strain ATCC BAA-621 / DSM 15236 / T118) (Rhodoferax ferrireducens).